The following is a 489-amino-acid chain: Bypass of stop codon protein 5 (489 aa).

The segment at Met-1–Glu-42 is disordered. Residues Ser-18 to Phe-30 show a composition bias toward low complexity. 2 positions are modified to phosphoserine: Ser-111 and Ser-350.

Belongs to the BUL1 family.

In terms of biological role, appears to play a role in translation fidelity, and may act when translation is compromised. May be a component of the ubiquitination pathway. This is Bypass of stop codon protein 5 (BSC5) from Saccharomyces cerevisiae (strain ATCC 204508 / S288c) (Baker's yeast).